A 540-amino-acid polypeptide reads, in one-letter code: L-aspartate oxidase (540 aa).

Residues 16–19 (SGAA), K38, 45–52 (STFYAQGG), and D223 contribute to the FAD site. R290 functions as the Proton donor/acceptor in the catalytic mechanism. FAD contacts are provided by residues E375 and 391-392 (SL).

Belongs to the FAD-dependent oxidoreductase 2 family. NadB subfamily. It depends on FAD as a cofactor.

Its subcellular location is the cytoplasm. The enzyme catalyses L-aspartate + O2 = iminosuccinate + H2O2. The catalysed reaction is fumarate + L-aspartate = iminosuccinate + succinate. Its pathway is cofactor biosynthesis; NAD(+) biosynthesis; iminoaspartate from L-aspartate (oxidase route): step 1/1. In terms of biological role, catalyzes the oxidation of L-aspartate to iminoaspartate, the first step in the de novo biosynthesis of NAD(+). Can use either oxygen or fumarate as electron acceptors, which allows the enzyme to be functional under aerobic and anaerobic conditions. This is L-aspartate oxidase (nadB) from Escherichia coli O157:H7.